The chain runs to 321 residues: GTP 3',8-cyclase (321 aa).

Residues 5-233 (SFNRVIDYIR…QGSSKIYTLE (229 aa)) form the Radical SAM core domain. Arginine 14 contacts GTP. 2 residues coordinate [4Fe-4S] cluster: cysteine 21 and cysteine 25. Tyrosine 27 is a binding site for S-adenosyl-L-methionine. Cysteine 28 contributes to the [4Fe-4S] cluster binding site. Arginine 64 contributes to the GTP binding site. Glycine 68 provides a ligand contact to S-adenosyl-L-methionine. A GTP-binding site is contributed by serine 95. Residue serine 119 participates in S-adenosyl-L-methionine binding. Lysine 155 contacts GTP. S-adenosyl-L-methionine is bound at residue methionine 189. Residues cysteine 249 and cysteine 252 each coordinate [4Fe-4S] cluster. Residue 254–256 (RIR) coordinates GTP. Cysteine 266 contributes to the [4Fe-4S] cluster binding site.

Belongs to the radical SAM superfamily. MoaA family. As to quaternary structure, monomer and homodimer. It depends on [4Fe-4S] cluster as a cofactor.

It carries out the reaction GTP + AH2 + S-adenosyl-L-methionine = (8S)-3',8-cyclo-7,8-dihydroguanosine 5'-triphosphate + 5'-deoxyadenosine + L-methionine + A + H(+). It functions in the pathway cofactor biosynthesis; molybdopterin biosynthesis. Catalyzes the cyclization of GTP to (8S)-3',8-cyclo-7,8-dihydroguanosine 5'-triphosphate. The chain is GTP 3',8-cyclase from Helicobacter pylori (strain HPAG1).